We begin with the raw amino-acid sequence, 178 residues long: ATP synthase subunit delta (178 aa).

This sequence belongs to the ATPase delta chain family. As to quaternary structure, F-type ATPases have 2 components, F(1) - the catalytic core - and F(0) - the membrane proton channel. F(1) has five subunits: alpha(3), beta(3), gamma(1), delta(1), epsilon(1). F(0) has three main subunits: a(1), b(2) and c(10-14). The alpha and beta chains form an alternating ring which encloses part of the gamma chain. F(1) is attached to F(0) by a central stalk formed by the gamma and epsilon chains, while a peripheral stalk is formed by the delta and b chains.

The protein resides in the cell inner membrane. Functionally, f(1)F(0) ATP synthase produces ATP from ADP in the presence of a proton or sodium gradient. F-type ATPases consist of two structural domains, F(1) containing the extramembraneous catalytic core and F(0) containing the membrane proton channel, linked together by a central stalk and a peripheral stalk. During catalysis, ATP synthesis in the catalytic domain of F(1) is coupled via a rotary mechanism of the central stalk subunits to proton translocation. Its function is as follows. This protein is part of the stalk that links CF(0) to CF(1). It either transmits conformational changes from CF(0) to CF(1) or is implicated in proton conduction. This Polynucleobacter necessarius subsp. necessarius (strain STIR1) protein is ATP synthase subunit delta.